Consider the following 208-residue polypeptide: Imidazoleglycerol-phosphate dehydratase (208 aa).

It belongs to the imidazoleglycerol-phosphate dehydratase family.

It carries out the reaction D-erythro-1-(imidazol-4-yl)glycerol 3-phosphate = 3-(imidazol-4-yl)-2-oxopropyl phosphate + H2O. Its pathway is amino-acid biosynthesis; L-histidine biosynthesis; L-histidine from 5-phospho-alpha-D-ribose 1-diphosphate: step 6/9. The chain is Imidazoleglycerol-phosphate dehydratase (his3) from Trichoderma harzianum (Hypocrea lixii).